Consider the following 310-residue polypeptide: Homoserine kinase (310 aa).

91–101 is a binding site for ATP; it reads PIGSGLGSSAC.

It belongs to the GHMP kinase family. Homoserine kinase subfamily.

It localises to the cytoplasm. The enzyme catalyses L-homoserine + ATP = O-phospho-L-homoserine + ADP + H(+). It participates in amino-acid biosynthesis; L-threonine biosynthesis; L-threonine from L-aspartate: step 4/5. Functionally, catalyzes the ATP-dependent phosphorylation of L-homoserine to L-homoserine phosphate. The polypeptide is Homoserine kinase (Shigella sonnei (strain Ss046)).